Here is an 83-residue protein sequence, read N- to C-terminus: Small ribosomal subunit protein bS16 (83 aa).

It belongs to the bacterial ribosomal protein bS16 family.

In Borrelia hermsii (strain HS1 / DAH), this protein is Small ribosomal subunit protein bS16.